We begin with the raw amino-acid sequence, 135 residues long: Ribosome-binding factor A (135 aa).

This sequence belongs to the RbfA family. In terms of assembly, monomer. Binds 30S ribosomal subunits, but not 50S ribosomal subunits or 70S ribosomes.

The protein localises to the cytoplasm. Its function is as follows. One of several proteins that assist in the late maturation steps of the functional core of the 30S ribosomal subunit. Associates with free 30S ribosomal subunits (but not with 30S subunits that are part of 70S ribosomes or polysomes). Required for efficient processing of 16S rRNA. May interact with the 5'-terminal helix region of 16S rRNA. In Aliivibrio fischeri (strain MJ11) (Vibrio fischeri), this protein is Ribosome-binding factor A.